The following is a 404-amino-acid chain: Chorismate synthase (404 aa).

NADP(+) is bound by residues R40 and R46. FMN-binding positions include 135-137 (RAS), 256-257 (QA), G300, 315-319 (KPIST), and R341.

This sequence belongs to the chorismate synthase family. In terms of assembly, homotetramer. FMNH2 is required as a cofactor.

The catalysed reaction is 5-O-(1-carboxyvinyl)-3-phosphoshikimate = chorismate + phosphate. It functions in the pathway metabolic intermediate biosynthesis; chorismate biosynthesis; chorismate from D-erythrose 4-phosphate and phosphoenolpyruvate: step 7/7. Catalyzes the anti-1,4-elimination of the C-3 phosphate and the C-6 proR hydrogen from 5-enolpyruvylshikimate-3-phosphate (EPSP) to yield chorismate, which is the branch point compound that serves as the starting substrate for the three terminal pathways of aromatic amino acid biosynthesis. This reaction introduces a second double bond into the aromatic ring system. In Mycobacterium sp. (strain JLS), this protein is Chorismate synthase.